A 310-amino-acid polypeptide reads, in one-letter code: Porphobilinogen deaminase (310 aa).

C241 is modified (S-(dipyrrolylmethanemethyl)cysteine).

Belongs to the HMBS family. In terms of assembly, monomer. Dipyrromethane is required as a cofactor.

It carries out the reaction 4 porphobilinogen + H2O = hydroxymethylbilane + 4 NH4(+). Its pathway is porphyrin-containing compound metabolism; protoporphyrin-IX biosynthesis; coproporphyrinogen-III from 5-aminolevulinate: step 2/4. In terms of biological role, tetrapolymerization of the monopyrrole PBG into the hydroxymethylbilane pre-uroporphyrinogen in several discrete steps. This is Porphobilinogen deaminase from Lysinibacillus sphaericus (strain C3-41).